The primary structure comprises 453 residues: V-type proton ATPase subunit B (453 aa).

ATP is bound at residue R341.

The protein belongs to the ATPase alpha/beta chains family. In terms of assembly, V-ATPase is a heteromultimeric enzyme made up of two complexes: the ATP-hydrolytic V1 complex and the proton translocation V0 complex. The V1 complex consists of three catalytic AB heterodimers that form a heterohexamer, three peripheral stalks each consisting of EG heterodimers, one central rotor including subunits D and F, and the regulatory subunits C and H. The proton translocation complex V0 consists of the proton transport subunit a, a ring of proteolipid subunits c9c'', rotary subunit d, subunits e and f, and two accessory subunits.

Functionally, non-catalytic subunit of the V1 complex of vacuolar(H+)-ATPase (V-ATPase), a multisubunit enzyme composed of a peripheral complex (V1) that hydrolyzes ATP and a membrane integral complex (V0) that translocates protons. V-ATPase is responsible for acidifying and maintaining the pH of intracellular compartments and in some cell types, is targeted to the plasma membrane, where it is responsible for acidifying the extracellular environment. Essential for the proper assembly and activity of V-ATPase. This is V-type proton ATPase subunit B (ATP6V1B) from Gallus gallus (Chicken).